We begin with the raw amino-acid sequence, 453 residues long: MTTDTIVAQATAPGRGGVGIIRISGDKASNVAMAVLGHLPKTRYADYCDFKSASGQVIDQGIALFFKGPNSFTGEDVLELQGHGGQIVLDMLIKRVMEVGGIRIAKPGEFSEQAFMNDKLDLTQAEAIADLIDATCEQAAKSALQSLQGEFSKEVHELVDQVTNLRLYVEAAIDFPDEEVDFLSDGKIANALYKIIDKLDLVQASAKQGSIIREGMKVVIAGRPNAGKSSLLNALAGKESAIVTEIAGTTRDVLREHIHLDGMPLHIIDTAGLRDTTDTVEQIGIERAWNEINSADRVLFMVDGTTTAAVDPHAIWPDFVDRLPSNLGVTVIRNKADLTGEDLMMTEEQGYSVYRISAKTGLGVEELKQHLKSLMGYQSNLEGGFIARRRHLEALELAAGHLQLGKEQLEVYLAGELLAEELRMCQLALSEITGRFTSDDLLGKIFSSFCIGK.

Residues R22, E79, and K119 each contribute to the (6S)-5-formyl-5,6,7,8-tetrahydrofolate site. In terms of domain architecture, TrmE-type G spans 215-376 (GMKVVIAGRP…LKQHLKSLMG (162 aa)). K(+) is bound at residue N225. GTP contacts are provided by residues 225-230 (NAGKSS), 244-250 (TEIAGTT), 269-272 (DTAG), and 334-337 (NKAD). S229 provides a ligand contact to Mg(2+). K(+) contacts are provided by T244, I246, and T249. T250 provides a ligand contact to Mg(2+). Residue K453 coordinates (6S)-5-formyl-5,6,7,8-tetrahydrofolate.

The protein belongs to the TRAFAC class TrmE-Era-EngA-EngB-Septin-like GTPase superfamily. TrmE GTPase family. As to quaternary structure, homodimer. Heterotetramer of two MnmE and two MnmG subunits. The cofactor is K(+).

It is found in the cytoplasm. Exhibits a very high intrinsic GTPase hydrolysis rate. Involved in the addition of a carboxymethylaminomethyl (cmnm) group at the wobble position (U34) of certain tRNAs, forming tRNA-cmnm(5)s(2)U34. The sequence is that of tRNA modification GTPase MnmE from Shewanella baltica (strain OS155 / ATCC BAA-1091).